The chain runs to 195 residues: MKAFVASGLLLLIFGMWRCSGIEPVSMECDYFTFRVIAKRALFYPDDLIGPDELLLGASCPVTSIRPDELEFYYDIHSCGTFIQHAFDGTIVNTWLTYMPRNISIYAELQLQCVIPRISQDELDNKQSSDECVGESESIDVGNLDFHPPPQCWFLVLKRYCIICGHFHFPNNWLIPYHGWKDESFQRLWPSLFHR.

The N-terminal stretch at 1–21 is a signal peptide; the sequence is MKAFVASGLLLLIFGMWRCSG. N102 carries N-linked (GlcNAc...) asparagine glycosylation.

This sequence belongs to the PLAC1 family. As to expression, oocyte-specific.

The protein resides in the secreted. This Mus musculus (Mouse) protein is Oocyte-secreted protein 3.